Consider the following 20-residue polypeptide: Peroxidase 1 (20 aa).

H14 contributes to the heme binding site. T15 is a Ca(2+) binding site.

This sequence belongs to the peroxidase family. Classical plant (class III) peroxidase subfamily. It depends on Ca(2+) as a cofactor. Requires heme b as cofactor.

The protein localises to the secreted. It catalyses the reaction 2 a phenolic donor + H2O2 = 2 a phenolic radical donor + 2 H2O. Its function is as follows. Removal of H(2)O(2), oxidation of toxic reductants, biosynthesis and degradation of lignin, suberization, auxin catabolism, response to environmental stresses such as wounding, pathogen attack and oxidative stress. These functions might be dependent on each isozyme/isoform in each plant tissue. This Betula pendula (European white birch) protein is Peroxidase 1.